Here is a 420-residue protein sequence, read N- to C-terminus: UDP-N-acetylglucosamine 1-carboxyvinyltransferase (420 aa).

22 to 23 is a binding site for phosphoenolpyruvate; it reads KN. Residue R92 participates in UDP-N-acetyl-alpha-D-glucosamine binding. The Proton donor role is filled by C116. Residue C116 is modified to 2-(S-cysteinyl)pyruvic acid O-phosphothioketal. Residues 121-125, D307, and L329 contribute to the UDP-N-acetyl-alpha-D-glucosamine site; that span reads RPIDL.

It belongs to the EPSP synthase family. MurA subfamily.

It is found in the cytoplasm. The enzyme catalyses phosphoenolpyruvate + UDP-N-acetyl-alpha-D-glucosamine = UDP-N-acetyl-3-O-(1-carboxyvinyl)-alpha-D-glucosamine + phosphate. The protein operates within cell wall biogenesis; peptidoglycan biosynthesis. Its function is as follows. Cell wall formation. Adds enolpyruvyl to UDP-N-acetylglucosamine. This chain is UDP-N-acetylglucosamine 1-carboxyvinyltransferase, found in Nitratiruptor sp. (strain SB155-2).